The primary structure comprises 335 residues: MAKIYKDEDISLEPIKNKTIAILGYGSQGRAWALNLRDSGLNVVVGLERQGDSWRRAIDDGFKPMYTKDAVAIADIIVFLVPDMVQKSLWLNSVKDFMKKGADLVFAHGFNIHFKIIEPPKDSDVYMIAPKSPGPIVRRSYEMGGGVPALVAVYQNVSGEALQKALAIAKGIGCARAGVIESTFKEETETDLFGEQVILVGGIMELIKASFETLVEEGYQPEVAYFETVNELKLIVDLIYEKGLTGMLRAVSDTAKYGGITVGKFIIDKSVRDKMKIVLERIRSGEFAREWIKEYERGMPTVFKELSELEGSTIETVGRKLREMMFRGMKQISSH.

Residues 2 to 182 (AKIYKDEDIS…GCARAGVIES (181 aa)) enclose the KARI N-terminal Rossmann domain. NADP(+) is bound by residues 25–28 (YGSQ), Arg49, Ser53, and 83–86 (DMVQ). His108 is a catalytic residue. Gly134 provides a ligand contact to NADP(+). One can recognise a KARI C-terminal knotted domain in the interval 183-328 (TFKEETETDL…RKLREMMFRG (146 aa)). Mg(2+) contacts are provided by Asp191, Glu195, Glu227, and Glu231. Ser252 serves as a coordination point for substrate.

This sequence belongs to the ketol-acid reductoisomerase family. In terms of assembly, homodimer. Mg(2+) is required as a cofactor.

The enzyme catalyses (2R)-2,3-dihydroxy-3-methylbutanoate + NAD(+) = (2S)-2-acetolactate + NADH + H(+). It carries out the reaction (2R)-2,3-dihydroxy-3-methylbutanoate + NADP(+) = (2S)-2-acetolactate + NADPH + H(+). It functions in the pathway amino-acid biosynthesis; L-isoleucine biosynthesis; L-isoleucine from 2-oxobutanoate: step 2/4. The protein operates within amino-acid biosynthesis; L-valine biosynthesis; L-valine from pyruvate: step 2/4. Functionally, involved in the biosynthesis of branched-chain amino acids (BCAA). Catalyzes an alkyl-migration followed by a ketol-acid reduction of (S)-2-acetolactate (S2AL) to yield (R)-2,3-dihydroxy-isovalerate. In the isomerase reaction, S2AL is rearranged via a Mg-dependent methyl migration to produce 3-hydroxy-3-methyl-2-ketobutyrate (HMKB). In the reductase reaction, this 2-ketoacid undergoes a metal-dependent reduction by NADPH or NADH to yield (R)-2,3-dihydroxy-isovalerate. This Ignisphaera aggregans (strain DSM 17230 / JCM 13409 / AQ1.S1) protein is Ketol-acid reductoisomerase (NAD(P)(+)).